Consider the following 243-residue polypeptide: UPF0758 protein Tery_2667 (243 aa).

Residues 113–235 (VVESPQAAAD…HSSLRQITNL (123 aa)) enclose the MPN domain. Zn(2+) contacts are provided by His184, His186, and Asp197. Residues 184 to 197 (HNHPSGNVEPSPED) carry the JAMM motif motif.

The protein belongs to the UPF0758 family.

The protein is UPF0758 protein Tery_2667 of Trichodesmium erythraeum (strain IMS101).